The primary structure comprises 176 residues: T cell receptor beta constant 1 (176 aa).

One can recognise an Ig-like C1-type domain in the interval 8–117; the sequence is PEVAVFEPSE…WTQDRAKPVT (110 aa). A disulfide bridge connects residues Cys-30 and Cys-95. A glycan (N-linked (GlcNAc...) asparagine) is linked at Asn-69. Residues 130–144 form a connecting peptide region; that stretch reads CGFTSVSYQQGVLSA. Residues 150–170 traverse the membrane as a helical segment; sequence ILLGKATLYAVLVSALVLMAM. Topologically, residues 171-176 are cytoplasmic; that stretch reads VKRKDF.

Alpha-beta TR is a heterodimer composed of an alpha and beta chain; disulfide-linked. The alpha-beta TR is associated with the transmembrane signaling CD3 coreceptor proteins to form the TR-CD3 (TcR or TCR). The assembly of alpha-beta TR heterodimers with CD3 occurs in the endoplasmic reticulum where a single alpha-beta TR heterodimer associates with one CD3D-CD3E heterodimer, one CD3G-CD3E heterodimer and one CD247 homodimer forming a stable octameric structure. CD3D-CD3E and CD3G-CD3E heterodimers preferentially associate with TR alpha and TR beta chains, respectively. The association of the CD247 homodimer is the last step of TcR assembly in the endoplasmic reticulum and is required for transport to the cell surface.

It is found in the cell membrane. Constant region of T cell receptor (TR) beta chain. Alpha-beta T cell receptors are antigen specific receptors which are essential to the immune response and are present on the cell surface of T lymphocytes. Recognize peptide-major histocompatibility (MH) (pMH) complexes that are displayed by antigen presenting cells (APC), a prerequisite for efficient T cell adaptive immunity against pathogens. Binding of alpha-beta TR to pMH complex initiates TR-CD3 clustering on the cell surface and intracellular activation of LCK that phosphorylates the ITAM motifs of CD3G, CD3D, CD3E and CD247 enabling the recruitment of ZAP70. In turn, ZAP70 phosphorylates LAT, which recruits numerous signaling molecules to form the LAT signalosome. The LAT signalosome propagates signal branching to three major signaling pathways, the calcium, the mitogen-activated protein kinase (MAPK) kinase and the nuclear factor NF-kappa-B (NF-kB) pathways, leading to the mobilization of transcription factors that are critical for gene expression and essential for T cell growth and differentiation. The T cell repertoire is generated in the thymus, by V-(D)-J rearrangement. This repertoire is then shaped by intrathymic selection events to generate a peripheral T cell pool of self-MH restricted, non-autoaggressive T cells. Post-thymic interaction of alpha-beta TR with the pMH complexes shapes TR structural and functional avidity. The chain is T cell receptor beta constant 1 from Homo sapiens (Human).